Here is an 84-residue protein sequence, read N- to C-terminus: MTDINRTLQGRVISDKMEKSMVVAIERTVKHPIYGKFIKRTTKLHVHDENNECGIGDVVEIRECRPLSKTKSWTLVRVVEKAIL.

It belongs to the universal ribosomal protein uS17 family. Part of the 30S ribosomal subunit.

Its function is as follows. One of the primary rRNA binding proteins, it binds specifically to the 5'-end of 16S ribosomal RNA. The polypeptide is Small ribosomal subunit protein uS17 (Serratia proteamaculans (strain 568)).